Reading from the N-terminus, the 406-residue chain is Phosphatidylinositol 5-phosphate 4-kinase type-2 alpha (406 aa).

A2 is subject to N-acetylalanine. At T3 the chain carries Phosphothreonine. Phosphoserine is present on S14. The PIPK domain maps to 33–405 (ASDPLLSVLM…RFLDFIGHIL (373 aa)). The required for interaction with PIP5K1A stretch occupies residues 59–65 (VMLMPDD). 2 positions are modified to N6-acetyllysine: K89 and K145. Positions 288 to 329 (QEEVECEENDGEEEGESDGTHPVGTPPDSPGNTLNSSPPLAP) are disordered. Positions 289-304 (EEVECEENDGEEEGES) are enriched in acidic residues.

Homodimer. Interacts with PIP4K2B; the interaction may regulate localization to the nucleus. Probably interacts with PIP5K1A; the interaction inhibits PIP5K1A kinase activity. Phosphorylated in tyrosines. Phosphorylation is induced by light and increases kinase activity.

It is found in the cell membrane. The protein resides in the nucleus. Its subcellular location is the lysosome. The protein localises to the cytoplasm. It localises to the photoreceptor inner segment. It is found in the cell projection. The protein resides in the cilium. Its subcellular location is the photoreceptor outer segment. It catalyses the reaction a 1,2-diacyl-sn-glycero-3-phospho-(1D-myo-inositol-5-phosphate) + ATP = a 1,2-diacyl-sn-glycero-3-phospho-(1D-myo-inositol-4,5-bisphosphate) + ADP + H(+). It carries out the reaction 1,2-dihexadecanoyl-sn-glycero-3-phospho-(1D-myo-inositol-5-phosphate) + ATP = 1,2-dihexadecanoyl-sn-glycero-3-phospho-(1D-myo-inositol-4,5-bisphosphate) + ADP + H(+). The catalysed reaction is 1,2-dihexadecanoyl-sn-glycero-3-phospho-(1D-myo-inositol-5-phosphate) + GTP = 1,2-dihexadecanoyl-sn-glycero-3-phospho-(1D-myo-inositol-4,5-bisphosphate) + GDP + H(+). With respect to regulation, in rod outer segments, activated by light. In terms of biological role, catalyzes the phosphorylation of phosphatidylinositol 5-phosphate (PtdIns5P) on the fourth hydroxyl of the myo-inositol ring, to form phosphatidylinositol 4,5-bisphosphate (PtdIns(4,5)P2). Has both ATP- and GTP-dependent kinase activities. May exert its function by regulating the levels of PtdIns5P, which functions in the cytosol by increasing AKT activity and in the nucleus signals through ING2. May regulate the pool of cytosolic PtdIns5P in response to the activation of tyrosine phosphorylation. May be involved in thrombopoiesis, and the terminal maturation of megakaryocytes and regulation of their size. May negatively regulate insulin-stimulated glucose uptake by lowering the levels of PtdIns5P. This Sus scrofa (Pig) protein is Phosphatidylinositol 5-phosphate 4-kinase type-2 alpha (PIP4K2A).